Reading from the N-terminus, the 79-residue chain is Acyl carrier protein (79 aa).

Residues 2–77 (ADFEARVKEI…SAIDYVKTHV (76 aa)) form the Carrier domain. An O-(pantetheine 4'-phosphoryl)serine modification is found at serine 37.

The protein belongs to the acyl carrier protein (ACP) family. 4'-phosphopantetheine is transferred from CoA to a specific serine of apo-ACP by AcpS. This modification is essential for activity because fatty acids are bound in thioester linkage to the sulfhydryl of the prosthetic group.

It localises to the cytoplasm. The protein operates within lipid metabolism; fatty acid biosynthesis. Functionally, carrier of the growing fatty acid chain in fatty acid biosynthesis. The protein is Acyl carrier protein of Endomicrobium trichonymphae.